We begin with the raw amino-acid sequence, 671 residues long: cGMP-dependent protein kinase 1 (671 aa).

Ser2 carries the post-translational modification N-acetylserine. Residues 2 to 59 adopt a coiled-coil conformation; sequence SELEEDFAKILMLKEERIKELEKRLSEKEEEIQELKRKLHKCQSVLPVPSTHIGPRTT. The segment at 2-102 is required for dimerization; sequence SELEEDFAKI…LIKEAILDND (101 aa). Residues 9–44 are leucine-zipper; that stretch reads AKILMLKEERIKELEKRLSEKEEEIQELKRKLHKCQ. The autoinhibitory domain stretch occupies residues 50–75; that stretch reads PSTHIGPRTTRAQGISAEPQTYRSFH. At Thr59 the chain carries Phosphothreonine; by autocatalysis. The interval 103-220 is cGMP-binding, high affinity; it reads FMKNLELSQI…EYMEFLKSVP (118 aa). 3',5'-cyclic GMP is bound by residues 167 to 170, 177 to 178, Arg282, 291 to 294, 301 to 302, and Tyr336; these read GELA, RT, and GEKA. The interval 221–341 is cGMP-binding, low affinity; it reads TFQSLPEEIL…SNKAYEDAEA (121 aa). The region spanning 360–619 is the Protein kinase domain; sequence FNIIDTLGVG…VKDIQKHKWF (260 aa). ATP is bound by residues 366–374 and Lys390; that span reads LGVGGFGRV. Catalysis depends on Asp484, which acts as the Proton acceptor. A Phosphothreonine modification is found at Thr515. Residues 620-671 form the AGC-kinase C-terminal domain; that stretch reads EGFNWEGLRKGTLTPPIIPSVASPTDTSNFDGFPEDNDEPPPDDNSGWDIDF. The segment at 635–671 is disordered; the sequence is PIIPSVASPTDTSNFDGFPEDNDEPPPDDNSGWDIDF. Residues 652 to 661 show a composition bias toward acidic residues; that stretch reads FPEDNDEPPP.

The protein belongs to the protein kinase superfamily. AGC Ser/Thr protein kinase family. cGMP subfamily. In terms of assembly, isoform alpha: parallel homodimer or heterodimer and also heterotetramer. Interacts directly with PPP1R12A. Non-covalent dimer of dimer of PRKG1-PRKG1 and PPP1R12A-PPP1R12A. This interaction targets PRKG1 to stress fibers to mediate smooth muscle cell relaxation and vasodilation in responses to rises in cGMP. Isoform beta: antiparallel homodimer. Part of cGMP kinase signaling complex at least composed of ACTA2/alpha-actin, CNN1/calponin H1, PLN/phospholamban, PRKG1 and ITPR1. Interacts with IRAG1. Forms a stable complex with ITPR1, IRAG1, and isoform beta of PRKG1. Interacts with TRPC7 (via ankyrin repeat domain). Isoform alpha interacts with RGS2. Interacts with GTF2I. Autophosphorylation increases kinase activity. In terms of processing, 65 kDa monomer is produced by proteolytic cleavage.

The protein localises to the cytoplasm. The catalysed reaction is L-seryl-[protein] + ATP = O-phospho-L-seryl-[protein] + ADP + H(+). It carries out the reaction L-threonyl-[protein] + ATP = O-phospho-L-threonyl-[protein] + ADP + H(+). Its activity is regulated as follows. In the absence of cGMP, PRKG1 activity is suppressed by autoinhibitory contacts. Serine/threonine protein kinase that acts as a key mediator of the nitric oxide (NO)/cGMP signaling pathway. GMP binding activates PRKG1, which phosphorylates serines and threonines on many cellular proteins. Numerous protein targets for PRKG1 phosphorylation are implicated in modulating cellular calcium, but the contribution of each of these targets may vary substantially among cell types. Proteins that are phosphorylated by PRKG1 regulate platelet activation and adhesion, smooth muscle contraction, cardiac function, gene expression, feedback of the NO-signaling pathway, and other processes involved in several aspects of the CNS like axon guidance, hippocampal and cerebellar learning, circadian rhythm and nociception. Smooth muscle relaxation is mediated through lowering of intracellular free calcium, by desensitization of contractile proteins to calcium, and by decrease in the contractile state of smooth muscle or in platelet activation. Regulates intracellular calcium levels via several pathways: phosphorylates IRAG1 and inhibits IP3-induced Ca(2+) release from intracellular stores, phosphorylation of KCNMA1 (BKCa) channels decreases intracellular Ca(2+) levels, which leads to increased opening of this channel. PRKG1 phosphorylates the canonical transient receptor potential channel (TRPC) family which inactivates the associated inward calcium current. Another mode of action of NO/cGMP/PKGI signaling involves PKGI-mediated inactivation of the Ras homolog gene family member A (RhoA). Phosphorylation of RHOA by PRKG1 blocks the action of this protein in myriad processes: regulation of RHOA translocation; decreasing contraction; controlling vesicle trafficking, reduction of myosin light chain phosphorylation resulting in vasorelaxation. Activation of PRKG1 by NO signaling also alters gene expression in a number of tissues. In smooth muscle cells, increased cGMP and PRKG1 activity influence expression of smooth muscle-specific contractile proteins, levels of proteins in the NO/cGMP signaling pathway, down-regulation of the matrix proteins osteopontin and thrombospondin-1 to limit smooth muscle cell migration and phenotype. Regulates vasodilator-stimulated phosphoprotein (VASP) functions in platelets and smooth muscle. This chain is cGMP-dependent protein kinase 1 (PRKG1), found in Oryctolagus cuniculus (Rabbit).